Reading from the N-terminus, the 495-residue chain is Catalase B (495 aa).

Positions 1–25 (MSNNKKLTSLFGAPVSDRENSMTAG) are disordered. Residues His55 and Asn128 contribute to the active site. Tyr338 is a heme binding site.

It belongs to the catalase family. In terms of assembly, homodimer. The cofactor is heme.

The catalysed reaction is 2 H2O2 = O2 + 2 H2O. Its function is as follows. Decomposes hydrogen peroxide into water and oxygen; serves to protect cells from the toxic effects of hydrogen peroxide. The sequence is that of Catalase B (katB) from Staphylococcus xylosus.